An 85-amino-acid chain; its full sequence is Protein RALF-like 28 (85 aa).

The signal sequence occupies residues 1-31 (MSILKETKRFMVVAMFIACVFISNNMNVAVA). Cystine bridges form between cysteine 48-cysteine 53 and cysteine 66-cysteine 72. The tract at residues 60-85 (NPYHRGCEKSKRCRGPDPPALPRKMI) is disordered. Positions 75-85 (PDPPALPRKMI) are enriched in pro residues.

Belongs to the plant rapid alkalinization factor (RALF) family.

It is found in the secreted. Its function is as follows. Cell signaling peptide that may regulate plant stress, growth, and development. Mediates a rapid alkalinization of extracellular space by mediating a transient increase in the cytoplasmic Ca(2+) concentration leading to a calcium-dependent signaling events through a cell surface receptor and a concomitant activation of some intracellular mitogen-activated protein kinases. This Arabidopsis thaliana (Mouse-ear cress) protein is Protein RALF-like 28 (RALFL28).